Here is a 565-residue protein sequence, read N- to C-terminus: Adenine deaminase (565 aa).

It belongs to the metallo-dependent hydrolases superfamily. Adenine deaminase family. The cofactor is Mn(2+).

It catalyses the reaction adenine + H2O + H(+) = hypoxanthine + NH4(+). The chain is Adenine deaminase from Gluconobacter oxydans (strain 621H) (Gluconobacter suboxydans).